A 709-amino-acid polypeptide reads, in one-letter code: Phosphoribosylformylglycinamidine synthase subunit PurL (709 aa).

Histidine 36 is a catalytic residue. Tyrosine 39 and lysine 80 together coordinate ATP. A Mg(2+)-binding site is contributed by glutamate 82. Substrate contacts are provided by residues 83–86 (SHNH) and arginine 105. The Proton acceptor role is filled by histidine 84. A Mg(2+)-binding site is contributed by aspartate 106. Residue glutamine 226 coordinates substrate. Residue aspartate 252 participates in Mg(2+) binding. 294–296 (ETQ) provides a ligand contact to substrate. 2 residues coordinate ATP: aspartate 470 and glycine 507. A substrate-binding site is contributed by serine 510.

This sequence belongs to the FGAMS family. Monomer. Part of the FGAM synthase complex composed of 1 PurL, 1 PurQ and 2 PurS subunits.

It is found in the cytoplasm. It catalyses the reaction N(2)-formyl-N(1)-(5-phospho-beta-D-ribosyl)glycinamide + L-glutamine + ATP + H2O = 2-formamido-N(1)-(5-O-phospho-beta-D-ribosyl)acetamidine + L-glutamate + ADP + phosphate + H(+). Its pathway is purine metabolism; IMP biosynthesis via de novo pathway; 5-amino-1-(5-phospho-D-ribosyl)imidazole from N(2)-formyl-N(1)-(5-phospho-D-ribosyl)glycinamide: step 1/2. Functionally, part of the phosphoribosylformylglycinamidine synthase complex involved in the purines biosynthetic pathway. Catalyzes the ATP-dependent conversion of formylglycinamide ribonucleotide (FGAR) and glutamine to yield formylglycinamidine ribonucleotide (FGAM) and glutamate. The FGAM synthase complex is composed of three subunits. PurQ produces an ammonia molecule by converting glutamine to glutamate. PurL transfers the ammonia molecule to FGAR to form FGAM in an ATP-dependent manner. PurS interacts with PurQ and PurL and is thought to assist in the transfer of the ammonia molecule from PurQ to PurL. The sequence is that of Phosphoribosylformylglycinamidine synthase subunit PurL from Saccharolobus islandicus (strain M.16.27) (Sulfolobus islandicus).